The chain runs to 536 residues: MSSFQIYRAALLLSILATANAQQVGTYTTETHPSLTWQTCTSDGSCTTNDGEVVIDANWRWVHSTSSATNCYTGNEWDTSICTDDVTCAANCALDGATYEATYGVTTSGSELRLNFVTQGSSKNIGSRLYLMSDDSNYELFKLLGQEFTFDVDVSNLPCGLNGALYFVAMDADGGTSEYSGNKAGAKYGTGYCDSQCPRDLKFINGEANCDGWEPSSNNVNTGVGDHGSCCAEMDVWEANSISNAFTAHPCDSVSQTMCDGDSCGGTYSASGDRYSGTCDPDGCDYNPYRLGNTDFYGPGLTVDTNSPFTVVTQFITDDGTSSGTLTEIKRLYVQNGEVIANGASTYSSVNGSSITSAFCESEKTLFGDENVFDKHGGLEGMGEAMAKGMVLVLSLWDDYAADMLWLDSDYPVNSSASTPGVARGTCSTDSGVPATVEAESPNAYVTYSNIKFGPIGSTYSSGSSSGSGSSSSSSSTTTKATSTTLKTTSTTSSGSSSTSAAQAYGQCGGQGWTGPTTCVSGYTCTYENAYYSQCL.

The signal sequence occupies residues 1–21 (MSSFQIYRAALLLSILATANA). The interval 22 to 458 (QQVGTYTTET…SNIKFGPIGS (437 aa)) is catalytic. Catalysis depends on E233, which acts as the Nucleophile. The active-site Proton donor is E238. N-linked (GlcNAc...) asparagine glycosylation is found at N351 and N414. Residues 459 to 500 (TYSSGSSSGSGSSSSSSSTTTKATSTTLKTTSTTSSGSSSTS) are ser/Thr-rich linker. The tract at residues 464–499 (SSSGSGSSSSSSSTTTKATSTTLKTTSTTSSGSSST) is disordered. The CBM1 domain occupies 500–536 (SAAQAYGQCGGQGWTGPTTCVSGYTCTYENAYYSQCL). Intrachain disulfides connect C508-C525 and C519-C535.

This sequence belongs to the glycosyl hydrolase 7 (cellulase C) family.

The protein localises to the secreted. It carries out the reaction Hydrolysis of (1-&gt;4)-beta-D-glucosidic linkages in cellulose and cellotetraose, releasing cellobiose from the non-reducing ends of the chains.. Its function is as follows. The biological conversion of cellulose to glucose generally requires three types of hydrolytic enzymes: (1) Endoglucanases which cut internal beta-1,4-glucosidic bonds; (2) Exocellobiohydrolases that cut the disaccharide cellobiose from the non-reducing end of the cellulose polymer chain; (3) Beta-1,4-glucosidases which hydrolyze the cellobiose and other short cello-oligosaccharides to glucose. This is 1,4-beta-D-glucan cellobiohydrolase B (cbhB) from Aspergillus niger.